The sequence spans 89 residues: Mapacalcine (89 aa).

At Gln89 the chain carries Glutamine amide.

In terms of assembly, homodimer. Contains disulfide bonds which may also be involved in dimerization.

Functionally, blocks calcium currents via interaction with a yet unknown target protein. Has no effect on L-type, T-type, N-type or P/Q-type voltage-gated calcium channels (VGCC). Has no effect on voltage-gated potassium or chloride channels. Blocks non-L-type VGCC calcium currents in mouse duodenal myocytes (IC(50)=0.2 uM). Blocks calcium influx induced by hypoxia/reoxygenation in rat hepatocytes. The protein is Mapacalcine of Pione vastifica (Boring sponge).